The following is a 292-amino-acid chain: MVAQTPSSPPLWLTIIYLLRWHKPAGRLILMIPALWAVCLAAQGLPPLPLLGTIALGTLATSGLGCVVNDLWDRDIDPQVERTKQRPLAARALSVQVGIGVALVALLCAAGLAFYLTPLSFWLCVAAVPVIVAYPGAKRVFPVPQLVLSIAWGFAVLISWSAVTGDLTDATWVLWGATVFWTLGFDTVYAMADREDDRRIGVNSSALFFGQYVGEAVGIFFALTIGCLFYLGMILMLNPLYWLSLAIAIVGWVIQYIQLSAPTPEPKLYGQIFGQNVIIGFVLLAGMLLGWL.

9 helical membrane-spanning segments follow: residues 28-48 (LILM…LPPL), 49-69 (PLLG…CVVN), 97-117 (VGIG…FYLT), 118-138 (PLSF…PGAK), 140-160 (VFPV…LISW), 172-192 (WVLW…YAMA), 217-237 (VGIF…ILML), 239-259 (PLYW…YIQL), and 272-292 (IFGQ…LGWL).

The protein belongs to the UbiA prenyltransferase family. It depends on Mg(2+) as a cofactor.

The protein resides in the cell inner membrane. It catalyses the reaction all-trans-nonaprenyl diphosphate + 4-hydroxybenzoate = 4-hydroxy-3-(all-trans-nonaprenyl)benzoate + diphosphate. In terms of biological role, catalyzes the prenylation of para-hydroxybenzoate (PHB) with an all-trans polyprenyl group. Mediates the second step in the final reaction sequence of plastoquinone-9 (PQ-9) biosynthesis, which is the condensation of the polyisoprenoid side chain with PHB, generating the first membrane-bound Q intermediate 4-hydroxy-3-solanesylbenzoate. The polypeptide is 4-hydroxybenzoate solanesyltransferase (Synechocystis sp. (strain ATCC 27184 / PCC 6803 / Kazusa)).